The following is a 128-amino-acid chain: Fluoride-specific ion channel FluC (128 aa).

A run of 4 helical transmembrane segments spans residues 5–25, 35–55, 67–87, and 96–116; these read IVAI…LSLA, LGTL…AVVF, LFVI…SVEV, and FGWA…LTAL. Residues glycine 75 and threonine 78 each coordinate Na(+).

It belongs to the fluoride channel Fluc/FEX (TC 1.A.43) family.

It is found in the cell inner membrane. The catalysed reaction is fluoride(in) = fluoride(out). Its activity is regulated as follows. Na(+) is not transported, but it plays an essential structural role and its presence is essential for fluoride channel function. In terms of biological role, fluoride-specific ion channel. Important for reducing fluoride concentration in the cell, thus reducing its toxicity. This Burkholderia cenocepacia (strain HI2424) protein is Fluoride-specific ion channel FluC.